The primary structure comprises 295 residues: MNETQMNRISKDKGFIAALDQSGGSTPKALLQYGIKENSYSNDEEMFNLVHEMRKRIIKSTAFNSKYILGAILFENTMYRTIDHKYTADYLWNEKNIVPFLKIDKGLSELENGVQLMKPITNLDELLKAAIEKNIFGTKMRSFIKEANSKGIKMVVDQQFELADKIANQGLVPIIEPEVDIKSTDKEKSEELLKLEISKHLSDLDKETKVMLKLSIPTKDNFYSDLMKDPHVVRIVALSGGYSQSEANERLSRNNGLIASFSRALSENLSIDQTDEEFNETLSNSIKEIYEASIT.

The Proton acceptor role is filled by Glu176. Residue Lys213 is the Schiff-base intermediate with dihydroxyacetone-P of the active site.

This sequence belongs to the class I fructose-bisphosphate aldolase family.

It catalyses the reaction beta-D-fructose 1,6-bisphosphate = D-glyceraldehyde 3-phosphate + dihydroxyacetone phosphate. Its pathway is carbohydrate degradation; glycolysis; D-glyceraldehyde 3-phosphate and glycerone phosphate from D-glucose: step 4/4. This Clostridium acetobutylicum (strain ATCC 824 / DSM 792 / JCM 1419 / IAM 19013 / LMG 5710 / NBRC 13948 / NRRL B-527 / VKM B-1787 / 2291 / W) protein is Fructose-bisphosphate aldolase class 1.